The primary structure comprises 557 residues: Selenoprotein N (557 aa).

Over residues 1–21 the composition is skewed to basic and acidic residues; the sequence is MAADVDKTPAGEQKDDHEDRG. The interval 1–28 is disordered; that stretch reads MAADVDKTPAGEQKDDHEDRGTPSSRRG. Residues 35 to 55 traverse the membrane as a helical segment; sequence ISSLFIIAAIPVIGVCIKYYL. A non-standard amino acid (selenocysteine) is located at residue selenocysteine 430. Residues asparagine 451 and asparagine 499 are each glycosylated (N-linked (GlcNAc...) asparagine).

Interacts with ryr3.

Its subcellular location is the endoplasmic reticulum membrane. Plays an important role in cell protection against oxidative stress and in the regulation of redox-related calcium homeostasis. Regulates the calcium level of the ER by protecting the calcium pump ATP2A2 against the oxidoreductase ERO1A-mediated oxidative damage. Acts as a modulator of ryanodine receptor (RyR) activity: protects RyR from oxidation due to increased oxidative stress, or directly controls the RyR redox state, regulating the RyR-mediated calcium mobilization required for normal muscle development and differentiation. Plays an important role in muscle development and differentiation during early development. Required for development of the slow muscle fiber lineage. Required for the correct organization and attachment of the myofibrils, as well as for the continuity and integrity of the connective tissue that forms the myoseptum. The protein is Selenoprotein N of Danio rerio (Zebrafish).